The sequence spans 162 residues: Cyclic pyranopterin monophosphate synthase (162 aa).

Substrate contacts are provided by residues M75–H77 and M115–E116. D130 is a catalytic residue.

It belongs to the MoaC family. Homohexamer; trimer of dimers.

It catalyses the reaction (8S)-3',8-cyclo-7,8-dihydroguanosine 5'-triphosphate = cyclic pyranopterin phosphate + diphosphate. The protein operates within cofactor biosynthesis; molybdopterin biosynthesis. In terms of biological role, catalyzes the conversion of (8S)-3',8-cyclo-7,8-dihydroguanosine 5'-triphosphate to cyclic pyranopterin monophosphate (cPMP). The chain is Cyclic pyranopterin monophosphate synthase from Geobacillus kaustophilus (strain HTA426).